A 256-amino-acid polypeptide reads, in one-letter code: Imidazole glycerol phosphate synthase subunit HisF (256 aa).

Catalysis depends on residues Asp-12 and Asp-131.

It belongs to the HisA/HisF family. Heterodimer of HisH and HisF.

The protein localises to the cytoplasm. The catalysed reaction is 5-[(5-phospho-1-deoxy-D-ribulos-1-ylimino)methylamino]-1-(5-phospho-beta-D-ribosyl)imidazole-4-carboxamide + L-glutamine = D-erythro-1-(imidazol-4-yl)glycerol 3-phosphate + 5-amino-1-(5-phospho-beta-D-ribosyl)imidazole-4-carboxamide + L-glutamate + H(+). The protein operates within amino-acid biosynthesis; L-histidine biosynthesis; L-histidine from 5-phospho-alpha-D-ribose 1-diphosphate: step 5/9. Functionally, IGPS catalyzes the conversion of PRFAR and glutamine to IGP, AICAR and glutamate. The HisF subunit catalyzes the cyclization activity that produces IGP and AICAR from PRFAR using the ammonia provided by the HisH subunit. The chain is Imidazole glycerol phosphate synthase subunit HisF from Micrococcus luteus (strain ATCC 4698 / DSM 20030 / JCM 1464 / CCM 169 / CCUG 5858 / IAM 1056 / NBRC 3333 / NCIMB 9278 / NCTC 2665 / VKM Ac-2230) (Micrococcus lysodeikticus).